A 170-amino-acid polypeptide reads, in one-letter code: Adenine phosphoribosyltransferase (170 aa).

The protein belongs to the purine/pyrimidine phosphoribosyltransferase family. As to quaternary structure, homodimer.

The protein localises to the cytoplasm. It carries out the reaction AMP + diphosphate = 5-phospho-alpha-D-ribose 1-diphosphate + adenine. It participates in purine metabolism; AMP biosynthesis via salvage pathway; AMP from adenine: step 1/1. Functionally, catalyzes a salvage reaction resulting in the formation of AMP, that is energically less costly than de novo synthesis. In Thermosynechococcus vestitus (strain NIES-2133 / IAM M-273 / BP-1), this protein is Adenine phosphoribosyltransferase.